The sequence spans 1037 residues: Signal-induced proliferation-associated protein 1 (1037 aa).

The segment at 1-85 is disordered; sequence MWAGGVGSPR…ASRPAATPTR (85 aa). The residue at position 62 (Thr-62) is a Phosphothreonine. Ser-65, Ser-178, Ser-299, and Ser-309 each carry phosphoserine. The region spanning 316-534 is the Rap-GAP domain; it reads LLTLDEQVLS…RTRQQYLQDL (219 aa). The PDZ domain maps to 682-758; sequence ELALPRDGQG…VCVTVLPPDE (77 aa). 2 positions are modified to phosphoserine: Ser-812 and Ser-834. Disordered regions lie at residues 830-849 and 855-898; these read HNSL…LPNT and LVTT…ASIL. Low complexity predominate over residues 871 to 881; it reads PPSQDQSGSPS. Ser-907 carries the post-translational modification Phosphoserine. Positions 943-969 are disordered; the sequence is REGQPISESGDPKEALKCDSEPEPGSL. The segment covering 952–962 has biased composition (basic and acidic residues); sequence GDPKEALKCDS. Positions 968–1025 form a coiled coil; sequence SLSEKVSHLESMLWKLQEDLQREKADRAALEEEVRSLRHNNQRLLAESESAATRLLLA.

In terms of assembly, interacts with RRP1B; the interaction leads to inhibition of SIPA1 GTPase activity. Preferentially expressed in both fetal and adult lymphohematopoietic tissues.

It localises to the nucleus. Its subcellular location is the cytoplasm. The protein resides in the perinuclear region. It is found in the endomembrane system. In terms of biological role, GTPase activator for the nuclear Ras-related regulatory proteins Rap1, Rsr1 and Ran in vitro, converting them to the putatively inactive GDP-bound state. Affects cell cycle progression. In Mus musculus (Mouse), this protein is Signal-induced proliferation-associated protein 1 (Sipa1).